Reading from the N-terminus, the 253-residue chain is Ubiquinone biosynthesis O-methyltransferase (253 aa).

S-adenosyl-L-methionine is bound by residues arginine 47, glycine 78, aspartate 99, and methionine 141.

This sequence belongs to the methyltransferase superfamily. UbiG/COQ3 family.

It catalyses the reaction a 3-demethylubiquinol + S-adenosyl-L-methionine = a ubiquinol + S-adenosyl-L-homocysteine + H(+). It carries out the reaction a 3-(all-trans-polyprenyl)benzene-1,2-diol + S-adenosyl-L-methionine = a 2-methoxy-6-(all-trans-polyprenyl)phenol + S-adenosyl-L-homocysteine + H(+). The protein operates within cofactor biosynthesis; ubiquinone biosynthesis. Its function is as follows. O-methyltransferase that catalyzes the 2 O-methylation steps in the ubiquinone biosynthetic pathway. This Rhodopseudomonas palustris (strain HaA2) protein is Ubiquinone biosynthesis O-methyltransferase.